Here is a 77-residue protein sequence, read N- to C-terminus: NADH dehydrogenase [ubiquinone] 1 alpha subcomplex subunit 3 (77 aa).

Residues Ile23–Tyr45 form a helical membrane-spanning segment.

It belongs to the complex I NDUFA3 subunit family. As to quaternary structure, complex I is composed of 43 different subunits.

It is found in the mitochondrion inner membrane. Its subcellular location is the cytoplasm. The protein localises to the myofibril. The protein resides in the sarcomere. It localises to the z line. Accessory subunit of the mitochondrial membrane respiratory chain NADH dehydrogenase (Complex I), that is believed not to be involved in catalysis. Complex I functions in the transfer of electrons from NADH to the respiratory chain. The immediate electron acceptor for the enzyme is believed to be ubiquinone. Required for the maintenance of muscle integrity and for cell proliferation in the wing imaginal disc epithelium, possibly by interacting with the chaperone-assisted selective autophagy (CASA) pathway. This is NADH dehydrogenase [ubiquinone] 1 alpha subcomplex subunit 3 from Drosophila melanogaster (Fruit fly).